Reading from the N-terminus, the 370-residue chain is Alpha-(1,3)-fucosyltransferase 7 (370 aa).

Residues Met1–Pro36 lie on the Cytoplasmic side of the membrane. Residues Val37–Trp59 traverse the membrane as a helical; Signal-anchor for type II membrane protein segment. Topologically, residues Leu60–Ala370 are lumenal. The N-linked (GlcNAc...) asparagine glycan is linked to Asn86. Cys96 and Cys104 form a disulfide bridge. Asn109 is a glycosylation site (N-linked (GlcNAc...) asparagine). Cys239 and Cys242 form a disulfide bridge. The N-linked (GlcNAc...) asparagine glycan is linked to Asn319. Cys346 and Cys349 are oxidised to a cystine.

This sequence belongs to the glycosyltransferase 10 family. In terms of processing, N-glycosylated. As to expression, expressed in lymph node and kidney.

It localises to the golgi apparatus. The protein resides in the golgi stack membrane. It carries out the reaction an N-acetyl-alpha-neuraminyl-(2-&gt;3)-beta-D-galactosyl-(1-&gt;4)-N-acetyl-beta-D-glucosaminyl derivative + GDP-beta-L-fucose = an alpha-Neu5Ac-(2-&gt;3)-beta-D-Gal-(1-&gt;4)-[alpha-L-Fuc-(1-&gt;3)]-beta-D-GlcNAc derivative + GDP + H(+). The catalysed reaction is a neolactoside IV(3)-alpha-NeuAc-nLc4Cer + GDP-beta-L-fucose = a neolactoside IV(3)-alpha-NeuNAc,III(3)-alpha-Fuc-nLc4Cer + GDP + H(+). The enzyme catalyses a neolactoside VI(3)-alpha-NeuNAc-nLc6Cer + GDP-beta-L-fucose = a neolactoside VI(3)-alpha-NeuAc,V(3)-alphaFuc-nLc6Cer + GDP + H(+). It catalyses the reaction an alpha-Neu5Ac-(2-&gt;3)-beta-D-Gal-(1-&gt;4)-beta-D-GlcNAc-(1-&gt;3)-beta-D-Gal-(1-&gt;4)-[alpha-L-Fuc-(1-&gt;3)]-beta-D-GlcNAc derivative + GDP-beta-L-fucose = an alpha-Neu5Ac-(2-&gt;3)-beta-D-Gal-(1-&gt;4)-[alpha-L-Fuc-(1-&gt;3)]-beta-D-GlcNAc-(1-&gt;3)-beta-D-Gal-(1-&gt;4)-[alpha-L-Fuc-(1-&gt;3)]-beta-D-GlcNAc derivative + GDP + H(+). It carries out the reaction an alpha-Neu5Ac-(2-&gt;3)-beta-D-Gal-(1-&gt;4)-beta-D-GlcNAc6S derivative + GDP-beta-L-fucose = an alpha-Neu5Ac-(2-&gt;3)-beta-D-Gal-(1-&gt;4)-[alpha-L-Fuc-(1-&gt;3)]-beta-D-GlcNAc6S derivative + GDP + H(+). The catalysed reaction is alpha-Neu5Ac-(2-&gt;3)-beta-D-Gal-(1-&gt;4)-beta-D-GlcNAc-(1-&gt;3)-beta-D-Gal-(1-&gt;4)-D-Glc + GDP-beta-L-fucose = alpha-Neu5Ac-(2-&gt;3)-beta-D-Gal-(1-&gt;4)-[alpha-L-Fuc-(1-&gt;3)]-beta-D-GlcNAc-(1-&gt;3)-beta-D-Gal-(1-&gt;4)-D-Glc + GDP + H(+). The enzyme catalyses alpha-Neu5Ac-(2-&gt;3)-beta-D-Gal-(1-&gt;4)-beta-D-GlcNAc-(1-&gt;3)-beta-D-Gal-(1-&gt;4)-[alpha-L-Fuc-(1-&gt;3)]-beta-D-GlcNAc-(1-&gt;3)-beta-D-Gal-(1-&gt;4)-beta-D-GlcNAc + GDP-beta-L-fucose = alpha-Neu5Ac-(2-&gt;3)-beta-D-Gal-(1-&gt;4)-[alpha-L-Fuc-(1-&gt;3)]-beta-D-GlcNAc-(1-&gt;3)-beta-D-Gal-(1-&gt;4)-[alpha-L-Fuc-(1-&gt;3)]-beta-D-GlcNAc-(1-&gt;3)-beta-D-Gal-(1-&gt;4)-beta-D-GlcNAc + GDP + H(+). It catalyses the reaction alpha-Neu5Ac-(2-&gt;3)-beta-D-Gal-(1-&gt;4)-beta-D-GlcNAc-(1-&gt;3)-beta-D-Gal-(1-&gt;4)-beta-D-GlcNAc-(1-&gt;3)-beta-D-Gal-(1-&gt;4)-beta-D-GlcNAc + GDP-beta-L-fucose = alpha-Neu5Ac-(2-&gt;3)-beta-D-Gal-(1-&gt;4)-[alpha-L-Fuc-(1-&gt;3)]-beta-D-GlcNAc-(1-&gt;3)-beta-D-Gal-(1-&gt;4)-beta-D-GlcNAc-(1-&gt;3)-beta-D-Gal-(1-&gt;4)-beta-D-GlcNAc + GDP + H(+). It participates in protein modification; protein glycosylation. Inhibited by NaCl. Inhibited by GDP in a concentration dependent manner, with an IC(50) value of 93 uM. Also inhibited by GMP and GTP. Inhibited by N-ethylmaleimide. Activated by poly(ethylene glycol) by enhancing the thermal stability of FUT7. Activated by Mn2+, Ca2+, and Mg2+. Both panosialin A and B inhibit activity with IC(50) values of 4.8 and 5.3 ug/ml, respectively. Inhibited by gallic acid (GA) and (-)-epigallocatechin gallate (EGCG) in a time-dependent and irreversible manner with IC(50) values of 60 and 700 nM, respectively. Functionally, catalyzes the transfer of L-fucose, from a guanosine diphosphate-beta-L-fucose, to the N-acetyl glucosamine (GlcNAc) of a distal alpha2,3 sialylated lactosamine unit of a glycoprotein or a glycolipid-linked sialopolylactosamines chain through an alpha-1,3 glycosidic linkage and participates in the final fucosylation step in the biosynthesis of the sialyl Lewis X (sLe(x)), a carbohydrate involved in cell and matrix adhesion during leukocyte trafficking and fertilization. In vitro, also synthesizes sialyl-dimeric-Lex structures, from VIM-2 structures and both di-fucosylated and trifucosylated structures from mono-fucosylated precursors. However does not catalyze alpha 1-3 fucosylation when an internal alpha 1-3 fucosylation is present in polylactosamine chain and the fucosylation rate of the internal GlcNAc residues is reduced once fucose has been added to the distal GlcNAc. Also catalyzes the transfer of a fucose from GDP-beta-fucose to the 6-sulfated a(2,3)sialylated substrate to produce 6-sulfo sLex mediating significant L-selectin-dependent cell adhesion. Through sialyl-Lewis(x) biosynthesis, can control SELE- and SELP-mediated cell adhesion with leukocytes and allows leukocytes tethering and rolling along the endothelial tissue thereby enabling the leukocytes to accumulate at a site of inflammation. May enhance embryo implantation through sialyl Lewis X (sLeX)-mediated adhesion of embryo cells to endometrium. May affect insulin signaling by up-regulating the phosphorylation and expression of some signaling molecules involved in the insulin-signaling pathway through SLe(x) which is present on the glycans of the INSRR alpha subunit. The chain is Alpha-(1,3)-fucosyltransferase 7 from Rattus norvegicus (Rat).